Here is a 198-residue protein sequence, read N- to C-terminus: Glycerol-3-phosphate acyltransferase (198 aa).

Helical transmembrane passes span 5 to 25, 56 to 76, 84 to 104, 114 to 134, and 158 to 178; these read LILLSLLAYVIGSIPSGLWIG, SIVTVMDILKGTVATLLPFFF, FWLLTGAFAIIGHSFPLFAGF, AGVILAYAPLLFVAALVVFLV, and LFMGDWILIVLVACIALFVIW.

The protein belongs to the PlsY family. As to quaternary structure, probably interacts with PlsX.

Its subcellular location is the cell membrane. The enzyme catalyses an acyl phosphate + sn-glycerol 3-phosphate = a 1-acyl-sn-glycero-3-phosphate + phosphate. It participates in lipid metabolism; phospholipid metabolism. In terms of biological role, catalyzes the transfer of an acyl group from acyl-phosphate (acyl-PO(4)) to glycerol-3-phosphate (G3P) to form lysophosphatidic acid (LPA). This enzyme utilizes acyl-phosphate as fatty acyl donor, but not acyl-CoA or acyl-ACP. The polypeptide is Glycerol-3-phosphate acyltransferase (Listeria monocytogenes serovar 1/2a (strain ATCC BAA-679 / EGD-e)).